The primary structure comprises 84 residues: Serine protease inhibitor Kazal-type 2 (84 aa).

A signal peptide spans 1 to 23; that stretch reads MALSVLRLALLLLAVTFAASLIP. A Pyrrolidone carboxylic acid modification is found at Gln-24. Residues 30-84 form the Kazal-like domain; sequence KYRTPNCSQYRLPGCPRHFNPVCGSDMSTYANECTLCMKIREGGHNIKIIRNGPC. Disulfide bonds link Cys-36–Cys-66, Cys-44–Cys-63, and Cys-52–Cys-84.

Expressed in epididymis (at protein level).

It is found in the secreted. Its subcellular location is the cytoplasmic vesicle. The protein resides in the secretory vesicle. The protein localises to the acrosome. In terms of biological role, as a strong inhibitor of acrosin, it is required for normal spermiogenesis. It probably hinders premature activation of proacrosin and other proteases, thus preventing the cascade of events leading to spermiogenesis defects. May be involved in the regulation of serine protease-dependent germ cell apoptosis. It also inhibits trypsin. This is Serine protease inhibitor Kazal-type 2 (SPINK2) from Homo sapiens (Human).